The primary structure comprises 183 residues: uncharacterized protein (183 aa).

Belongs to the chlamydial CPn_0803/CT_584/TC_0873 family.

This is an uncharacterized protein from Chlamydia muridarum (strain MoPn / Nigg).